Here is a 186-residue protein sequence, read N- to C-terminus: ATP synthase subunit b, chloroplastic (186 aa).

Residues 26 to 44 (ILETNLINLGVVIGTLLYF) traverse the membrane as a helical segment.

This sequence belongs to the ATPase B chain family. In terms of assembly, F-type ATPases have 2 components, F(1) - the catalytic core - and F(0) - the membrane proton channel. F(1) has five subunits: alpha(3), beta(3), gamma(1), delta(1), epsilon(1). F(0) has four main subunits: a(1), b(1), b'(1) and c(10-14). The alpha and beta chains form an alternating ring which encloses part of the gamma chain. F(1) is attached to F(0) by a central stalk formed by the gamma and epsilon chains, while a peripheral stalk is formed by the delta, b and b' chains.

It localises to the plastid. The protein localises to the chloroplast thylakoid membrane. Its function is as follows. F(1)F(0) ATP synthase produces ATP from ADP in the presence of a proton or sodium gradient. F-type ATPases consist of two structural domains, F(1) containing the extramembraneous catalytic core and F(0) containing the membrane proton channel, linked together by a central stalk and a peripheral stalk. During catalysis, ATP synthesis in the catalytic domain of F(1) is coupled via a rotary mechanism of the central stalk subunits to proton translocation. Component of the F(0) channel, it forms part of the peripheral stalk, linking F(1) to F(0). The protein is ATP synthase subunit b, chloroplastic of Chara vulgaris (Common stonewort).